Reading from the N-terminus, the 466-residue chain is ATP synthase subunit beta (466 aa).

Gly155–Thr162 provides a ligand contact to ATP.

It belongs to the ATPase alpha/beta chains family. In terms of assembly, F-type ATPases have 2 components, CF(1) - the catalytic core - and CF(0) - the membrane proton channel. CF(1) has five subunits: alpha(3), beta(3), gamma(1), delta(1), epsilon(1). CF(0) has three main subunits: a(1), b(2) and c(9-12). The alpha and beta chains form an alternating ring which encloses part of the gamma chain. CF(1) is attached to CF(0) by a central stalk formed by the gamma and epsilon chains, while a peripheral stalk is formed by the delta and b chains.

Its subcellular location is the cell inner membrane. The enzyme catalyses ATP + H2O + 4 H(+)(in) = ADP + phosphate + 5 H(+)(out). Functionally, produces ATP from ADP in the presence of a proton gradient across the membrane. The catalytic sites are hosted primarily by the beta subunits. This Bordetella pertussis (strain Tohama I / ATCC BAA-589 / NCTC 13251) protein is ATP synthase subunit beta.